A 336-amino-acid chain; its full sequence is PTS system glucitol/sorbitol-specific EIIB component (336 aa).

A PTS EIIB type-5 domain is found at 3 to 195; the sequence is KYNAIKIVKG…AVQSMITTIL (193 aa). Cys75 serves as the catalytic Phosphocysteine intermediate; for EIIB activity. Cys75 bears the Phosphocysteine; by EIIA mark. A run of 5 helical transmembrane segments spans residues 194-214, 228-248, 250-270, 278-298, and 312-332; these read ILPFMAFVAMLIGIIQGSGFG, GIGLMILGFICSIPLLSALLG, GAVIAQIVGTLIGVEIGKGTI, ALFAINTQCACDFIPVGLGLA, and VLYSRFMIGVPRVAVAWVASI.

The protein resides in the cell membrane. It carries out the reaction D-sorbitol(out) + N(pros)-phospho-L-histidyl-[protein] = D-sorbitol 6-phosphate(in) + L-histidyl-[protein]. Functionally, the phosphoenolpyruvate-dependent sugar phosphotransferase system (sugar PTS), a major carbohydrate active transport system, catalyzes the phosphorylation of incoming sugar substrates concomitantly with their translocation across the cell membrane. The enzyme II complex composed of SrlA, SrlB and SrlE is involved in glucitol/sorbitol transport. The protein is PTS system glucitol/sorbitol-specific EIIB component (srlE) of Clostridium beijerinckii (strain ATCC 51743 / NCIMB 8052) (Clostridium acetobutylicum).